The primary structure comprises 196 residues: MADGQLPFPCSYPSRLRRDPFRDSPLSSRLLDDGFGMDPFPDDLTAPWPEWALPRLSSAWPGTLRSGMVPRGPPATARFGVPAEGRSPPPFPGEPWKVCVNVHSFKPEELMVKTKDGYVEVSGKHEEKQQEGGIVSKNFTKKIQLPAEVDPATVFASLSPEGLLIIEAPQVPPYSPFGESSFNNELPQDNQEVTCS.

A disordered region spans residues 1–28 (MADGQLPFPCSYPSRLRRDPFRDSPLSS). A phosphoserine mark is found at Ser24 and Ser57. The residue at position 63 (Thr63) is a Phosphothreonine. 2 positions are modified to asymmetric dimethylarginine: Arg71 and Arg78. One can recognise a sHSP domain in the interval 78 to 185 (RFGVPAEGRS…PFGESSFNNE (108 aa)). Residue Ser87 is modified to Phosphoserine. The disordered stretch occupies residues 176-196 (PFGESSFNNELPQDNQEVTCS). Residues 178–196 (GESSFNNELPQDNQEVTCS) are compositionally biased toward polar residues.

The protein belongs to the small heat shock protein (HSP20) family. As to quaternary structure, monomer. Forms a ternary complex with BAG3 and HSPA1A. Component of the chaperone-assisted selective autophagy (CASA) complex consisting of BAG3, HSPA8/HSC70, HSPB8 and STUB1/CHIP. Interacts with HSPB1. Interacts with DNAJB6. Interacts with BAG3. As to expression, highly expressed in skeletal muscle, heart, uterus, liver, lung and ovary. Low levels found in stomach and brain. Not detected in small intestine, large intestine, kidney, spleen and testis. In the ovary, expression is concentrated in the endometrium and in the connective tissue between the circular and longitudinal muscles of the myometrium.

The protein resides in the cytoplasm. It localises to the nucleus. Involved in the chaperone-assisted selective autophagy (CASA), a crucial process for protein quality control, particularly in mechanical strained cells and tissues such as muscle. Displays temperature-dependent chaperone activity. The sequence is that of Heat shock protein beta-8 (Hspb8) from Mus musculus (Mouse).